Here is a 678-residue protein sequence, read N- to C-terminus: Oviduct-specific glycoprotein (678 aa).

The first 21 residues, 1–21, serve as a signal peptide directing secretion; that stretch reads MWKLLLWVGLVLVLKHHDGAA. The GH18 domain maps to 22–385; that stretch reads HKLVCYFTNW…YVLNDILVRA (364 aa). The cysteines at positions 26 and 51 are disulfide-linked. Residues 71 to 72, 98 to 101, Tyr142, 211 to 214, and Trp355 each bind chitin; these read LQ, GGWN, and LSYD. 2 N-linked (GlcNAc...) asparagine glycosylation sites follow: Asn402 and Asn441. The disordered stretch occupies residues 524-544; the sequence is LTPVGHQSVTPVSHQSVSPGG. Positions 528 to 544 are enriched in polar residues; that stretch reads GHQSVTPVSHQSVSPGG. N-linked (GlcNAc...) asparagine glycans are attached at residues Asn580, Asn596, and Asn648. Residues 581 to 606 are disordered; the sequence is ISVTPEGQTMPLRGENLTSEVGTHPR. The span at 651–662 shows a compositional bias: polar residues; it reads SVNSVTPQTSPL. The tract at residues 651 to 678 is disordered; it reads SVNSVTPQTSPLSLKKEIPENSAVDEEA.

This sequence belongs to the glycosyl hydrolase 18 family. Oviduct.

The protein localises to the cytoplasmic vesicle. The protein resides in the secretory vesicle. Binds to oocyte zona pellucida in vivo. May play a role in the fertilization process and/or early embryonic development. This chain is Oviduct-specific glycoprotein (OVGP1), found in Homo sapiens (Human).